The chain runs to 365 residues: tRNA/tmRNA (uracil-C(5))-methyltransferase (365 aa).

Positions 189, 217, 222, 238, and 298 each coordinate S-adenosyl-L-methionine. Cys323 acts as the Nucleophile in catalysis. Glu357 (proton acceptor) is an active-site residue.

It belongs to the class I-like SAM-binding methyltransferase superfamily. RNA M5U methyltransferase family. TrmA subfamily.

It catalyses the reaction uridine(54) in tRNA + S-adenosyl-L-methionine = 5-methyluridine(54) in tRNA + S-adenosyl-L-homocysteine + H(+). The catalysed reaction is uridine(341) in tmRNA + S-adenosyl-L-methionine = 5-methyluridine(341) in tmRNA + S-adenosyl-L-homocysteine + H(+). Functionally, dual-specificity methyltransferase that catalyzes the formation of 5-methyluridine at position 54 (m5U54) in all tRNAs, and that of position 341 (m5U341) in tmRNA (transfer-mRNA). The sequence is that of tRNA/tmRNA (uracil-C(5))-methyltransferase from Pasteurella multocida (strain Pm70).